We begin with the raw amino-acid sequence, 427 residues long: Trigger factor (427 aa).

Residues 163–248 form the PPIase FKBP-type domain; it reads GNIAIIDFKG…VKGIKAKELP (86 aa).

The protein belongs to the FKBP-type PPIase family. Tig subfamily.

It is found in the cytoplasm. It catalyses the reaction [protein]-peptidylproline (omega=180) = [protein]-peptidylproline (omega=0). Its function is as follows. Involved in protein export. Acts as a chaperone by maintaining the newly synthesized protein in an open conformation. Functions as a peptidyl-prolyl cis-trans isomerase. This is Trigger factor from Clostridium botulinum (strain Eklund 17B / Type B).